The chain runs to 346 residues: MAFPFTSIVGQEEMKLSLILNIIDPRIGGVLVMGHRGTGKSTTVRALAEVLPLIDRVKGDIYNRTVEQYIEMESGVKGAPVLKASDVKTEKIPVPVVDLPLGATEDRVCGTIDIEKALTSGVKAFEPGLLAQANRGFLYIDEVNLLDDHLVDVLLDVAASGKNVVEREGISIRHPARFVLVGSGNPEEGELRPQLLDRFGLHARIITINDVAKRVEIVKLRREYDENPEAFLKKVVRQQQKLQKEIVAAQKLLPKVSMDDSVLTDIARLCMALGIDGHRGELTITRTAHAFAALQGDTNVTMEHVRKIAGLCLRHRLRKDPLETVDAGEKIDRELAKVLGEAEVAA.

Residue 34–41 coordinates ATP; the sequence is GHRGTGKS.

It belongs to the Mg-chelatase subunits D/I family.

It carries out the reaction protoporphyrin IX + Mg(2+) + ATP + H2O = Mg-protoporphyrin IX + ADP + phosphate + 3 H(+). It participates in porphyrin-containing compound metabolism; bacteriochlorophyll biosynthesis. Involved in bacteriochlorophyll biosynthesis; introduces a magnesium ion into protoporphyrin IX to yield Mg-protoporphyrin IX. The sequence is that of Magnesium-chelatase 38 kDa subunit (bchI) from Chlorobaculum parvum (strain DSM 263 / NCIMB 8327) (Chlorobium vibrioforme subsp. thiosulfatophilum).